The chain runs to 603 residues: UvrABC system protein C (603 aa).

The GIY-YIG domain maps to aspartate 15–isoleucine 92. The region spanning lysine 197–threonine 232 is the UVR domain.

The protein belongs to the UvrC family. As to quaternary structure, interacts with UvrB in an incision complex.

The protein localises to the cytoplasm. Its function is as follows. The UvrABC repair system catalyzes the recognition and processing of DNA lesions. UvrC both incises the 5' and 3' sides of the lesion. The N-terminal half is responsible for the 3' incision and the C-terminal half is responsible for the 5' incision. The protein is UvrABC system protein C of Listeria monocytogenes serotype 4b (strain CLIP80459).